The primary structure comprises 1475 residues: Nuclear pore complex protein Nup153 (1475 aa).

Residues 1-15 (MASGAGGVGGGGGGK) are compositionally biased toward gly residues. 3 disordered regions span residues 1–37 (MASG…QQHQ), 90–124 (DEES…NYPD), and 171–225 (DSTS…TATS). A2 carries the N-acetylalanine modification. Residue T102 is modified to Phosphothreonine. Polar residues-rich tracts occupy residues 107-121 (VSNT…TASN) and 181-190 (ISTTSGFSSR). Residues S182, S185, S192, S203, and S209 each carry the phosphoserine modification. Copy 1 of the repeat occupies 236–237 (FG). Residues 236 to 1418 (FGTLSPSLGN…NSPSGVFTFG (1183 aa)) form a 29 X 2 AA repeats of F-G region. Residues S240, S257, S297, S320, S330, S333, S334, S338, and S343 each carry the phosphoserine modification. K353 is covalently cross-linked (Glycyl lysine isopeptide (Lys-Gly) (interchain with G-Cter in SUMO2)). Position 369 is a phosphothreonine (T369). K384 carries the post-translational modification N6-acetyllysine. T388 bears the Phosphothreonine mark. A phosphoserine mark is found at S500, S516, S518, S522, and S529. O-linked (GlcNAc) serine glycosylation is found at S534 and S544. T588 carries the phosphothreonine modification. S607, S614, S619, and S633 each carry phosphoserine. Copy 2 of the repeat occupies 652 to 653 (FG). The segment at 657–687 (KAGSSWQCDTCLLQNKVTDNKCIACQAAKLS) adopts a RanBP2-type 1 zinc-finger fold. Residues C664, C667, C678, and C681 each coordinate Zn(2+). Residue S687 is modified to Phosphoserine. The stretch at 715–716 (FG) is repeat 3. K718 carries the post-translational modification N6-acetyllysine. A RanBP2-type 2 zinc finger spans residues 722-751 (VIGTWDCDTCLVQNKPEAIKCVACETPKPG). The Zn(2+) site is built by C728, C731, C742, and C745. Residues 786-787 (FG) form repeat 4. RanBP2-type zinc fingers lie at residues 793–822 (PIGS…EKPG) and 851–880 (PEGS…AKPG). Zn(2+)-binding residues include C799, C802, C813, C816, C857, C860, C871, and C874. A Phosphoserine modification is found at S891. Repeat 5 spans residues 905–906 (FG). S908 and S909 each carry an O-linked (GlcNAc) serine glycan. Copy 6 of the repeat occupies 926–927 (FG). Residue K954 is modified to N6-acetyllysine. Repeat copies occupy residues 961-962 (FG), 983-984 (FG), 1000-1001 (FG), 1024-1025 (FG), and 1084-1085 (FG). The O-linked (GlcNAc) serine glycan is linked to S1113. 2 tandem repeats follow at residues 1118 to 1119 (FG) and 1135 to 1136 (FG). Residues 1128-1167 (KCQPVFSFGNSEQTKDENSSKSTFSFSMTKPSEKESEQPA) are disordered. The segment covering 1147-1157 (SKSTFSFSMTK) has biased composition (low complexity). O-linked (GlcNAc) threonine glycosylation occurs at T1156. 11 repeat units span residues 1173-1174 (FG), 1212-1213 (FG), 1228-1229 (FG), 1240-1241 (FG), 1275-1276 (FG), 1289-1290 (FG), 1291-1292 (FG), 1306-1307 (FG), 1319-1320 (FG), 1327-1328 (FG), and 1341-1342 (FG). Residues 1311–1402 (SAPSASPAFG…SAFQFGSSTT (92 aa)) are disordered. Polar residues predominate over residues 1321–1335 (ANQTPTFGQSQGASQ). 2 stretches are compositionally biased toward polar residues: residues 1343–1356 (SISS…TGSQ) and 1363–1396 (GTVS…SAFQ). Residues 1350–1475 (LFPTGSQPAP…KIKTAVRRRK (126 aa)) are (Microbial infection) Interacts with HIV-1 capsid protein p24 (CA). Repeat copies occupy residues 1362 to 1363 (FG), 1374 to 1375 (FG), 1383 to 1384 (FG), 1397 to 1398 (FG), and 1417 to 1418 (FG). Polar residues-rich tracts occupy residues 1420 to 1431 (NSSTPAASAQPS) and 1438 to 1463 (FNQS…TSFS). The interval 1420-1475 (NSSTPAASAQPSGSGGFPFNQSPAAFTVGSNGKNVFSSSGTSFSGRKIKTAVRRRK) is disordered. S1457, S1461, and S1463 each carry phosphoserine. Basic residues predominate over residues 1465-1475 (RKIKTAVRRRK).

The protein belongs to the NUP153 family. As to quaternary structure, part of the nuclear pore complex (NPC). Interacts with TPR (via coiled coil region); the interaction is direct and provides a link between the core structure and the TPR-containing nuclear basket of the nuclear pore complex (NPC). Interacts with HIKESHI. Interacts with SENP2. Interacts with XPO5. Interacts with RAN; the interaction occurs in a GTP- and GDP-independent manner. Interacts with MCM3AP isoform GANP; this interaction is required for GANP localization at the nuclear pore complex. Interacts with MAPK1. In terms of assembly, (Microbial infection) Interacts (via C-terminus) with HIV-1 capsid protein p24 (CA) (via N-terminus). (Microbial infection) Interacts with HIV-1 integrase; this interaction might play a role in nuclear import of HIV pre-integration complex. As to quaternary structure, (Microbial infection) Interacts with hepatitis B virus capsid protein; this interaction probably plays a role in nuclear import of HBV genome. In terms of assembly, (Microbial infection) Interacts with Epstein-barr virus BGLF4; this interaction allows BGLF4 nuclear entry. (Microbial infection) Interacts with HIV-2 virus protein vpx; this interaction might promote vpx nuclear entry. It depends on Zn(2+) as a cofactor. In terms of processing, phosphorylated in interphase, hyperphosphorylated during mitosis. May play a role in the reversible disassembly of the nuclear pore complex during mitosis. Proteolytically degraded after poliovirus (PV) infection; degradation is partial and NCP- and TPR-binding domains withstand degradation. Post-translationally, O-glycosylated during cytokinesis at sites identical or close to phosphorylation sites, this interferes with the phosphorylation status.

It is found in the nucleus. The protein resides in the nucleus membrane. It localises to the nuclear pore complex. In terms of biological role, component of the nuclear pore complex (NPC), a complex required for the trafficking across the nuclear envelope. Functions as a scaffolding element in the nuclear phase of the NPC essential for normal nucleocytoplasmic transport of proteins and mRNAs. Involved in the quality control and retention of unspliced mRNAs in the nucleus; in association with TPR, regulates the nuclear export of unspliced mRNA species bearing constitutive transport element (CTE) in a NXF1- and KHDRBS1-independent manner. Mediates TPR anchoring to the nuclear membrane at NPC. The repeat-containing domain may be involved in anchoring other components of the NPC to the pore membrane. Possible DNA-binding subunit of the nuclear pore complex (NPC). Its function is as follows. (Microbial infection) Interacts with HIV-1 caspid protein P24 and thereby promotes the integration of the virus in the nucleus of non-dividing cells (in vitro). Functionally, (Microbial infection) Binds HIV-2 protein vpx and thereby promotes the nuclear translocation of the lentiviral genome (in vitro). The chain is Nuclear pore complex protein Nup153 (NUP153) from Homo sapiens (Human).